Here is a 629-residue protein sequence, read N- to C-terminus: Dapper homolog 3 (629 aa).

Phosphoserine is present on Ser6. Disordered stretches follow at residues Pro50–Ala76 and Gly105–Val574. The span at Glu56 to Ala69 shows a compositional bias: acidic residues. Residues Ala63 to Pro87 adopt a coiled-coil conformation. Residues Gly105 to Gly150 are compositionally biased toward low complexity. A phosphoserine mark is found at Ser165 and Ser239. An Omega-N-methylarginine modification is found at Arg258. Residues Pro301–Gly311 show a composition bias toward basic and acidic residues. The segment covering Ser316–Glu335 has biased composition (low complexity). The segment covering Pro336–Ser348 has biased composition (pro residues). 2 positions are modified to phosphoserine: Ser426 and Ser478. The segment covering Ser525–Arg535 has biased composition (low complexity). A compositionally biased stretch (gly residues) spans Gly536 to Gly546. A compositionally biased stretch (low complexity) spans Glu547 to Asp568. Residues Met626–Val629 carry the PDZ-binding motif.

Belongs to the dapper family. As to quaternary structure, can form homodimers and heterodimers with DACT1 or DACT3. Interacts with CSNK1D, PKA catalytic subunit, PKC-type kinase, DVL1, DVL3, VANGL1, VANGL2 and CTNND1. Interacts with DVL2.

In terms of biological role, may be involved in regulation of intracellular signaling pathways during development. Specifically thought to play a role in canonical and/or non-canonical Wnt signaling pathways through interaction with DSH (Dishevelled) family proteins. This is Dapper homolog 3 (DACT3) from Homo sapiens (Human).